A 1053-amino-acid chain; its full sequence is Sal-like protein 4 (1053 aa).

Positions 1-62 (MSRRKQAKPQ…DEVASEDEAT (62 aa)) are disordered. Over residues 20–46 (EQQPQQQTPEFADAAPAAPAAGELGAP) the composition is skewed to low complexity. Phosphoserine is present on S57. The C2H2-type 1; atypical zinc finger occupies 72-94 (HVCEKCCAEFFSISEFLEHKKNC). The interval 116–149 (SGAVLSHQPTSPGSKDCHRENGGSSEDMKEKPDA) is disordered. Residues 130 to 149 (KDCHRENGGSSEDMKEKPDA) are compositionally biased toward basic and acidic residues. A Glycyl lysine isopeptide (Lys-Gly) (interchain with G-Cter in SUMO1); alternate cross-link involves residue K156. K156 is covalently cross-linked (Glycyl lysine isopeptide (Lys-Gly) (interchain with G-Cter in SUMO2); alternate). Residues K175, K190, and K290 each participate in a glycyl lysine isopeptide (Lys-Gly) (interchain with G-Cter in SUMO2) cross-link. S307 carries the phosphoserine modification. K316 participates in a covalent cross-link: Glycyl lysine isopeptide (Lys-Gly) (interchain with G-Cter in SUMO1); alternate. K316 is covalently cross-linked (Glycyl lysine isopeptide (Lys-Gly) (interchain with G-Cter in SUMO2); alternate). Residue K372 forms a Glycyl lysine isopeptide (Lys-Gly) (interchain with G-Cter in SUMO2) linkage. K374 participates in a covalent cross-link: Glycyl lysine isopeptide (Lys-Gly) (interchain with G-Cter in SUMO1); alternate. K374 participates in a covalent cross-link: Glycyl lysine isopeptide (Lys-Gly) (interchain with G-Cter in SUMO2); alternate. 2 C2H2-type zinc fingers span residues 382-404 (HKCK…LRSH) and 410-432 (FVCS…FHRH). K436 is covalently cross-linked (Glycyl lysine isopeptide (Lys-Gly) (interchain with G-Cter in SUMO2)). Residues 483-496 (VGLPQNLSSGTNPK) show a composition bias toward polar residues. Residues 483-546 (VGLPQNLSSG…QGSGTPEPGS (64 aa)) are disordered. T541 carries the phosphothreonine modification. K550 participates in a covalent cross-link: Glycyl lysine isopeptide (Lys-Gly) (interchain with G-Cter in SUMO2). 2 C2H2-type zinc fingers span residues 566-588 (NECL…YRTH) and 594-616 (FQCK…LGVH). Glycyl lysine isopeptide (Lys-Gly) (interchain with G-Cter in SUMO2) cross-links involve residues K597 and K623. The C2H2-type 6 zinc finger occupies 626–648 (HSCPICQKKFTNAVMLQQHIRMH). Disordered stretches follow at residues 694-714 (EEVS…PLPS), 736-776 (VGPA…QSRS), and 788-828 (LSPA…LPST). Residues 698-708 (SQEAPSSSSKV) are compositionally biased toward low complexity. Polar residues-rich tracts occupy residues 743–776 (LQRQ…QSRS) and 788–797 (LSPANSQAES). 2 positions are modified to phosphoserine: S776 and S789. The span at 810-821 (ESSENSRTEMEG) shows a compositional bias: basic and acidic residues. Residue K838 forms a Glycyl lysine isopeptide (Lys-Gly) (interchain with G-Cter in SUMO1); alternate linkage. A Glycyl lysine isopeptide (Lys-Gly) (interchain with G-Cter in SUMO2); alternate cross-link involves residue K838. The residue at position 852 (S852) is a Phosphoserine. A C2H2-type 7 zinc finger spans residues 870 to 892 (HGCTRCGKNFSSASALQIHERTH). A Glycyl lysine isopeptide (Lys-Gly) (interchain with G-Cter in SUMO2) cross-link involves residue K896. The segment at 898 to 920 (FVCNICGRAFTTKGNLKVHYMTH) adopts a C2H2-type 8 zinc-finger fold. Glycyl lysine isopeptide (Lys-Gly) (interchain with G-Cter in SUMO2) cross-links involve residues K932 and K947. A disordered region spans residues 1018–1039 (GSQSGISADVEKPSATDGVPKH). S1019 is modified (phosphoserine).

Belongs to the sal C2H2-type zinc-finger protein family. As to quaternary structure, interacts with POU5F1/OCT4. Interacts with NANOG. Interacts with BEND3. Interacts with NSD2 (via PHD-type zinc fingers 1, 2 and 3). Interacts with NRBP1. Post-translationally, isoform SALL4B exists primarily as a ubiquitinated form. In terms of processing, sumoylation with both SUMO1 and SUMO2 regulates the stability, subcellular localization, transcriptional activity, and may reduce interaction with POU5F1/OCT4. Expressed in testis. Constitutively expressed in acute myeloid leukemia (AML).

The protein resides in the cytoplasm. It is found in the nucleus. Its function is as follows. Transcription factor with a key role in the maintenance and self-renewal of embryonic and hematopoietic stem cells. The protein is Sal-like protein 4 (SALL4) of Homo sapiens (Human).